The primary structure comprises 442 residues: Thymidine phosphorylase (442 aa).

Belongs to the thymidine/pyrimidine-nucleoside phosphorylase family. As to quaternary structure, homodimer.

It catalyses the reaction thymidine + phosphate = 2-deoxy-alpha-D-ribose 1-phosphate + thymine. It functions in the pathway pyrimidine metabolism; dTMP biosynthesis via salvage pathway; dTMP from thymine: step 1/2. Functionally, the enzymes which catalyze the reversible phosphorolysis of pyrimidine nucleosides are involved in the degradation of these compounds and in their utilization as carbon and energy sources, or in the rescue of pyrimidine bases for nucleotide synthesis. The polypeptide is Thymidine phosphorylase (Vibrio vulnificus (strain CMCP6)).